The chain runs to 151 residues: Neuroglobin (151 aa).

The 149-residue stretch at 1–149 (MERPEQELIR…VVQAMSRGWD (149 aa)) folds into the Globin domain. Heme b contacts are provided by histidine 64 and histidine 96.

This sequence belongs to the globin family. Monomer. Homodimer and homotetramer; disulfide-linked. Mainly monomeric but also detected as part of homodimers and homotetramers. Interacts with 14-3-3 proteins; regulates the phosphorylation of NGB. Could interact (ferrous form) with G-alpha(i) proteins (GTP-bound form). In terms of processing, phosphorylated during hypoxia by ERK1/ERK2. Phosphorylation regulates the heme pocket hexacoordination preventing the association of His-64 with the heme metal center. Thereby, promotes the access of dioxygen and nitrite to the heme and stimulates the nitrite reductase activity. Phosphorylation during hypoxia is stabilized by 14-3-3 proteins.

It localises to the cytoplasm. Its subcellular location is the cytosol. The protein localises to the mitochondrion matrix. The catalysed reaction is Fe(III)-heme b-[protein] + nitric oxide + H2O = Fe(II)-heme b-[protein] + nitrite + 2 H(+). In terms of biological role, monomeric globin with a bis-histidyl six-coordinate heme-iron atom through which it can bind dioxygen, carbon monoxide and nitric oxide. Could help transport oxygen and increase its availability to the metabolically active neuronal tissues, though its low quantity in tissues as well as its high affinity for dioxygen, which may limit its oxygen-releasing ability, argue against it. The ferrous/deoxygenated form exhibits a nitrite reductase activity and it could produce nitric oxide which in turn inhibits cellular respiration in response to hypoxia. In its ferrous/deoxygenated state, it may also exhibit GDI (Guanine nucleotide Dissociation Inhibitor) activity toward heterotrimeric G-alpha proteins, thereby regulating signal transduction to facilitate neuroprotective responses in the wake of hypoxia and associated oxidative stress. This Oryctolagus cuniculus (Rabbit) protein is Neuroglobin.